Consider the following 547-residue polypeptide: Chaperonin GroEL 1 (547 aa).

ATP is bound by residues 30–33 (TLGP), lysine 51, 87–91 (DGTTT), glycine 415, and aspartate 495.

It belongs to the chaperonin (HSP60) family. As to quaternary structure, forms a cylinder of 14 subunits composed of two heptameric rings stacked back-to-back. Interacts with the co-chaperonin GroES.

The protein localises to the cytoplasm. It carries out the reaction ATP + H2O + a folded polypeptide = ADP + phosphate + an unfolded polypeptide.. Together with its co-chaperonin GroES, plays an essential role in assisting protein folding. The GroEL-GroES system forms a nano-cage that allows encapsulation of the non-native substrate proteins and provides a physical environment optimized to promote and accelerate protein folding. This chain is Chaperonin GroEL 1, found in Azorhizobium caulinodans (strain ATCC 43989 / DSM 5975 / JCM 20966 / LMG 6465 / NBRC 14845 / NCIMB 13405 / ORS 571).